The primary structure comprises 200 residues: Large ribosomal subunit protein uL4 (200 aa).

The segment at 43-71 is disordered; the sequence is RAQKTRAEVSGSGKKPWRQKGTGRARSGD.

Belongs to the universal ribosomal protein uL4 family. As to quaternary structure, part of the 50S ribosomal subunit.

Functionally, one of the primary rRNA binding proteins, this protein initially binds near the 5'-end of the 23S rRNA. It is important during the early stages of 50S assembly. It makes multiple contacts with different domains of the 23S rRNA in the assembled 50S subunit and ribosome. Its function is as follows. Forms part of the polypeptide exit tunnel. In Histophilus somni (strain 2336) (Haemophilus somnus), this protein is Large ribosomal subunit protein uL4.